We begin with the raw amino-acid sequence, 80 residues long: Small ribosomal subunit protein uS17c (80 aa).

Belongs to the universal ribosomal protein uS17 family. In terms of assembly, part of the 30S ribosomal subunit.

It is found in the plastid. Its subcellular location is the chloroplast. Functionally, one of the primary rRNA binding proteins, it binds specifically to the 5'-end of 16S ribosomal RNA. In Gracilaria tenuistipitata var. liui (Red alga), this protein is Small ribosomal subunit protein uS17c (rps17).